Reading from the N-terminus, the 2294-residue chain is Protein Ycf2 (2294 aa).

Residue 1648–1655 coordinates ATP; it reads GSIGTGRS.

This sequence belongs to the Ycf2 family.

It is found in the plastid. The protein resides in the chloroplast stroma. In terms of biological role, probable ATPase of unknown function. Its presence in a non-photosynthetic plant (Epifagus virginiana) and experiments in tobacco indicate that it has an essential function which is probably not related to photosynthesis. This is Protein Ycf2 from Arabidopsis thaliana (Mouse-ear cress).